Consider the following 802-residue polypeptide: Bifunctional purine biosynthetic protein ADE5,7 (802 aa).

The tract at residues 1 to 450 is GARS; it reads MLNILVLGNG…QNSESSKVAI (450 aa). The ATP-grasp domain maps to 114 to 330; sequence KRFMSKHNIP…LAQVFLAAAE (217 aa). 141 to 203 contributes to the ATP binding site; it reads QAHTDKAFVI…EQFLEGDEIS (63 aa). Mg(2+)-binding residues include glutamate 298 and asparagine 300. The AIRS stretch occupies residues 451 to 802; it reads TYADSGVSVD…CVIENGTKLY (352 aa). 2 positions are modified to phosphoserine: serine 455 and serine 458.

This sequence in the N-terminal section; belongs to the GARS family. The protein in the C-terminal section; belongs to the AIR synthase family. It depends on Mg(2+) as a cofactor. Mn(2+) is required as a cofactor.

It localises to the cytoplasm. The catalysed reaction is 5-phospho-beta-D-ribosylamine + glycine + ATP = N(1)-(5-phospho-beta-D-ribosyl)glycinamide + ADP + phosphate + H(+). It carries out the reaction 2-formamido-N(1)-(5-O-phospho-beta-D-ribosyl)acetamidine + ATP = 5-amino-1-(5-phospho-beta-D-ribosyl)imidazole + ADP + phosphate + H(+). It functions in the pathway purine metabolism; IMP biosynthesis via de novo pathway; 5-amino-1-(5-phospho-D-ribosyl)imidazole from N(2)-formyl-N(1)-(5-phospho-D-ribosyl)glycinamide: step 2/2. It participates in purine metabolism; IMP biosynthesis via de novo pathway; N(1)-(5-phospho-D-ribosyl)glycinamide from 5-phospho-alpha-D-ribose 1-diphosphate: step 2/2. Catalyzes the second and fifth step in the 'de novo' purine biosynthesis pathway; contains phosphoribosylamine--glycine ligase (GARS) and phosphoribosylformylglycinamidine cyclo-ligase (AIRS) activities. In Saccharomyces cerevisiae (strain ATCC 204508 / S288c) (Baker's yeast), this protein is Bifunctional purine biosynthetic protein ADE5,7.